The following is a 428-amino-acid chain: Stromal membrane-associated protein 2 (428 aa).

The Arf-GAP domain maps to 13-139; the sequence is QAVLGSLLSE…INTFRKEKDD (127 aa). The C4-type zinc-finger motif lies at 28-51; it reads CADCQAKGPRWASWNIGVFICIRC. The span at 161-172 shows a compositional bias: basic and acidic residues; the sequence is VKMPQKKEETQQ. 2 disordered regions span residues 161-182 and 222-258; these read VKMP…KSTE and SRKV…AGKK.

May interact with clathrin heavy chains.

In terms of biological role, GTPase activating protein. May play a role in clathrin-dependent retrograde transport from early endosomes to the trans-Golgi network. This chain is Stromal membrane-associated protein 2 (SMAP2), found in Gallus gallus (Chicken).